Reading from the N-terminus, the 1072-residue chain is DNA-directed RNA polymerase subunit beta (1072 aa).

The protein belongs to the RNA polymerase beta chain family. As to quaternary structure, in plastids the minimal PEP RNA polymerase catalytic core is composed of four subunits: alpha, beta, beta', and beta''. When a (nuclear-encoded) sigma factor is associated with the core the holoenzyme is formed, which can initiate transcription.

The protein localises to the plastid. It is found in the chloroplast. The enzyme catalyses RNA(n) + a ribonucleoside 5'-triphosphate = RNA(n+1) + diphosphate. Its function is as follows. DNA-dependent RNA polymerase catalyzes the transcription of DNA into RNA using the four ribonucleoside triphosphates as substrates. In Crucihimalaya wallichii (Rock-cress), this protein is DNA-directed RNA polymerase subunit beta.